Consider the following 823-residue polypeptide: Putative ankyrin repeat domain-containing protein 20A4 (823 aa).

ANK repeat units follow at residues 66–95 (QHRT…QIDV), 99–128 (ENRT…NPNL), 132–161 (YGNT…HIEA), 165–194 (DNNT…SSHA), and 198–227 (LRRS…DVFA). Disordered regions lie at residues 301 to 343 (VPEK…EVED) and 356 to 405 (QTLR…NICD). Residues 371 to 384 (EQQRHERSEKKQPQ) are compositionally biased toward basic and acidic residues. Coiled coils occupy residues 431-480 (KKLK…KQLE), 565-724 (EMIT…NNST), and 776-806 (FVLE…KTEV).

The polypeptide is Putative ankyrin repeat domain-containing protein 20A4 (Homo sapiens (Human)).